The primary structure comprises 102 residues: Small ribosomal subunit protein uS10 (102 aa).

Belongs to the universal ribosomal protein uS10 family. As to quaternary structure, part of the 30S ribosomal subunit.

In terms of biological role, involved in the binding of tRNA to the ribosomes. The chain is Small ribosomal subunit protein uS10 from Mesorhizobium japonicum (strain LMG 29417 / CECT 9101 / MAFF 303099) (Mesorhizobium loti (strain MAFF 303099)).